Here is a 125-residue protein sequence, read N- to C-terminus: ATP synthase epsilon chain (125 aa).

It belongs to the ATPase epsilon chain family. F-type ATPases have 2 components, CF(1) - the catalytic core - and CF(0) - the membrane proton channel. CF(1) has five subunits: alpha(3), beta(3), gamma(1), delta(1), epsilon(1). CF(0) has three main subunits: a, b and c.

It localises to the cell inner membrane. In terms of biological role, produces ATP from ADP in the presence of a proton gradient across the membrane. This chain is ATP synthase epsilon chain, found in Aliarcobacter butzleri (strain RM4018) (Arcobacter butzleri).